A 165-amino-acid polypeptide reads, in one-letter code: Large ribosomal subunit protein uL10 (165 aa).

The protein belongs to the universal ribosomal protein uL10 family. As to quaternary structure, part of the ribosomal stalk of the 50S ribosomal subunit. The N-terminus interacts with L11 and the large rRNA to form the base of the stalk. The C-terminus forms an elongated spine to which L12 dimers bind in a sequential fashion forming a multimeric L10(L12)X complex.

In terms of biological role, forms part of the ribosomal stalk, playing a central role in the interaction of the ribosome with GTP-bound translation factors. The protein is Large ribosomal subunit protein uL10 of Pectobacterium atrosepticum (strain SCRI 1043 / ATCC BAA-672) (Erwinia carotovora subsp. atroseptica).